The chain runs to 115 residues: Large ribosomal subunit protein bL19 (115 aa).

Belongs to the bacterial ribosomal protein bL19 family.

This protein is located at the 30S-50S ribosomal subunit interface and may play a role in the structure and function of the aminoacyl-tRNA binding site. This is Large ribosomal subunit protein bL19 from Buchnera aphidicola subsp. Acyrthosiphon pisum (strain 5A).